The chain runs to 367 residues: Phosphoribosylaminoimidazole-succinocarboxamide synthase (367 aa).

It belongs to the SAICAR synthetase family.

The enzyme catalyses 5-amino-1-(5-phospho-D-ribosyl)imidazole-4-carboxylate + L-aspartate + ATP = (2S)-2-[5-amino-1-(5-phospho-beta-D-ribosyl)imidazole-4-carboxamido]succinate + ADP + phosphate + 2 H(+). It participates in purine metabolism; IMP biosynthesis via de novo pathway; 5-amino-1-(5-phospho-D-ribosyl)imidazole-4-carboxamide from 5-amino-1-(5-phospho-D-ribosyl)imidazole-4-carboxylate: step 1/2. This chain is Phosphoribosylaminoimidazole-succinocarboxamide synthase, found in Shewanella putrefaciens (strain CN-32 / ATCC BAA-453).